We begin with the raw amino-acid sequence, 123 residues long: Amoebiasin-2 (123 aa).

The N-terminal stretch at 1-16 is a signal peptide; it reads MKQFIFFALLCTSTYA. Residues 45-50 carry the BC loop motif; it reads NPSTGY. The DE loop motif lies at 71–81; the sequence is EPHPSGMVGFP. The FG loop motif lies at 105 to 114; sequence PWEKGKEPLR.

Belongs to the protease inhibitor I42 family. In terms of assembly, monomer. May form homodimer. Interacts with cysteine protease CP2. Interacts with cysteine protease CP5.

It is found in the cytoplasmic vesicle. The protein localises to the lysosome. The protein resides in the phagosome. Functionally, cysteine protease inhibitor. Inhibits cysteine proteases CP1, CP2 and to a lesser extent CP5. The protein is Amoebiasin-2 of Entamoeba histolytica (strain ATCC 30459 / HM-1:IMSS / ABRM).